The chain runs to 646 residues: uncharacterized protein (646 aa).

The next 8 helical transmembrane spans lie at 20–42 (ILSR…LYLL), 55–77 (FLAG…IHQV), 97–115 (LLHF…HYML), 127–149 (YTFD…FSYW), 159–181 (IAFV…FFKL), 188–206 (ILLG…LLLA), 216–238 (YGAV…YHLF), and 251–273 (WVTM…IGTA).

Its subcellular location is the cell membrane. This is an uncharacterized protein from Bacillus subtilis (strain 168).